Reading from the N-terminus, the 330-residue chain is Phosphate acyltransferase (330 aa).

This sequence belongs to the PlsX family. As to quaternary structure, homodimer. Probably interacts with PlsY.

Its subcellular location is the cytoplasm. It carries out the reaction a fatty acyl-[ACP] + phosphate = an acyl phosphate + holo-[ACP]. It functions in the pathway lipid metabolism; phospholipid metabolism. Catalyzes the reversible formation of acyl-phosphate (acyl-PO(4)) from acyl-[acyl-carrier-protein] (acyl-ACP). This enzyme utilizes acyl-ACP as fatty acyl donor, but not acyl-CoA. The protein is Phosphate acyltransferase of Bacillus thuringiensis (strain Al Hakam).